The chain runs to 348 residues: Short-chain dehydrogenase fogG (348 aa).

NADP(+)-binding residues include Leu51, Arg75, Asp100, and Asn126. Residues Ser180 and Tyr215 each act as proton donor in the active site. NADP(+)-binding residues include Tyr215 and Lys219. Lys219 functions as the Lowers pKa of active site Tyr in the catalytic mechanism.

This sequence belongs to the short-chain dehydrogenases/reductases (SDR) family.

Its pathway is secondary metabolite biosynthesis. In terms of biological role, short-chain dehydrogenase; part of the gene cluster that mediates the biosynthesis of flavoglaucin and congeners (including aspergin, dihydroauroglaucin and auroglaucin), prenylated salicylaldehyde derivatives carrying a saturated or an unsaturated C-7 side chain. The PKS fogA releases the carboxylic acid (8E,10E,12E)-3,5,7-trihydroxytetradeca-8,10,12-trienoic acid as its product, as well as derivatives with one and two double bonds. FogA is indeed able to reduce the initial triketide, thus being at least partially responsible for the differently saturated heptyl side chains of flavoglaucin congeners. The oxidoreductases fogB, fogC and fogD modify the nascent polyketide in fogA-bound form and, together, fogA, fogB, fogC and fogD are necessary for the formation of the aromatic core and the cyclized PKS products are released as salicyl alcohols. In particular, fogB is responsible for oxidation of a hydroxyl group or reduction of remaining double bond(s) at the C-7 residue whereas fogD is probably involved in the reductive release of the modified PKS products. The cytochrome P450 monooxygenase fogE is then responsible for the hydroxylation at C-3 of the benzene ring. The fogE products are substrates of the prenyltransferase fogH and the prenylated benzyl alcohols are subsequently oxidized by the fogF to produce the final aryl aldehydes flavoglaucin and congeners. The short-chain dehydrogenase fogG does not seem to be involved in the biosynthesis of the prenylated salicylaldehyde derivatives. The sequence is that of Short-chain dehydrogenase fogG from Aspergillus ruber (strain CBS 135680).